The sequence spans 344 residues: GTPase Obg (344 aa).

An Obg domain is found at 1 to 159 (MKFLDLAKVY…RTIWLRLKLI (159 aa)). One can recognise an OBG-type G domain in the interval 160-327 (ADVGLLGLPN…VLRALRARID (168 aa)). Residues 166 to 173 (GLPNAGKS), 191 to 195 (FTTLH), 212 to 215 (DIPG), 279 to 282 (NKID), and 308 to 310 (SGA) contribute to the GTP site. The Mg(2+) site is built by Ser173 and Thr193.

Belongs to the TRAFAC class OBG-HflX-like GTPase superfamily. OBG GTPase family. As to quaternary structure, monomer. Mg(2+) serves as cofactor.

Its subcellular location is the cytoplasm. In terms of biological role, an essential GTPase which binds GTP, GDP and possibly (p)ppGpp with moderate affinity, with high nucleotide exchange rates and a fairly low GTP hydrolysis rate. Plays a role in control of the cell cycle, stress response, ribosome biogenesis and in those bacteria that undergo differentiation, in morphogenesis control. The sequence is that of GTPase Obg from Ruegeria pomeroyi (strain ATCC 700808 / DSM 15171 / DSS-3) (Silicibacter pomeroyi).